The primary structure comprises 365 residues: Bifunctional chorismate mutase/prephenate dehydratase (365 aa).

The Chorismate mutase domain occupies 1–96 (MADQDQLKAL…SCLALEQPLK (96 aa)). Substrate contacts are provided by R11, R28, K39, and E57. A Prephenate dehydratase domain is found at 97–272 (VAYLGPEGTF…NSTRFLIIGN (176 aa)). Residues 284–361 (SIIVSMRNKP…VALKVLGSYP (78 aa)) form the ACT domain.

The protein resides in the cytoplasm. It catalyses the reaction chorismate = prephenate. It carries out the reaction prephenate + H(+) = 3-phenylpyruvate + CO2 + H2O. It functions in the pathway amino-acid biosynthesis; L-phenylalanine biosynthesis; phenylpyruvate from prephenate: step 1/1. Its pathway is metabolic intermediate biosynthesis; prephenate biosynthesis; prephenate from chorismate: step 1/1. In terms of biological role, catalyzes the Claisen rearrangement of chorismate to prephenate and the decarboxylation/dehydration of prephenate to phenylpyruvate. This is Bifunctional chorismate mutase/prephenate dehydratase (pheA) from Pseudomonas aeruginosa (strain ATCC 15692 / DSM 22644 / CIP 104116 / JCM 14847 / LMG 12228 / 1C / PRS 101 / PAO1).